We begin with the raw amino-acid sequence, 135 residues long: UPF0102 protein Mkms_2031 (135 aa).

It belongs to the UPF0102 family.

This Mycobacterium sp. (strain KMS) protein is UPF0102 protein Mkms_2031.